A 144-amino-acid polypeptide reads, in one-letter code: MTIVNILRVDIDQPFDYLDKQFYGNLTLRKLLVWRIFYVSKVFSQHVESLEFRKSLSGNIHVLVTINPGIQRTLVPLAQFLMGDDIMRTFMNLKRKGKGNYLFSYGNTDADRFLAERQIARKQKALNRKKSKTKNGEKNGEGKS.

Residues 124–133 (KALNRKKSKT) are compositionally biased toward basic residues. Residues 124–144 (KALNRKKSKTKNGEKNGEGKS) form a disordered region. A compositionally biased stretch (basic and acidic residues) spans 134-144 (KNGEKNGEGKS).

This is an uncharacterized protein from Acidianus filamentous virus 1 (isolate United States/Yellowstone) (AFV-1).